The chain runs to 378 residues: Poly(3-hydroxyalkanoate) polymerase subunit PhaC (378 aa).

Residues 84–356 (PVLIVYALVN…QSFPVGHIGM (273 aa)) enclose the AB hydrolase-1 domain.

The protein belongs to the PHA/PHB synthase family. Type III PhaC subfamily. Forms a heterodimer with PhaE, which may multimerize in the presence of 3-hydroxybutyryl-CoA. Both subunits are required for PHB synthesis in E.coli and in PHA-negative A.eutrophus.

The protein localises to the cytoplasm. The catalysed reaction is (3R)-3-hydroxybutanoyl-CoA + [(3R)-hydroxybutanoate](n) = [(3R)-hydroxybutanoate](n+1) + CoA. It functions in the pathway biopolymer metabolism; poly-(R)-3-hydroxybutanoate biosynthesis. When expressed in E.coli with Synechocystis PhaE and C.necator PhaA and PhaB, confers the ability to synthesize up to 13% (w/w) poly(3-hydroxybutyrate) (PHB) depending on the carbon source; all 4 genes are necessary for PHB production. Cell-free in vitro coexpression with PhaE gives a heterodimer able to polymerize 3-hydroxybutyrate-CoA. This Synechocystis sp. (strain ATCC 27184 / PCC 6803 / Kazusa) protein is Poly(3-hydroxyalkanoate) polymerase subunit PhaC.